The primary structure comprises 185 residues: Ribosome-recycling factor (185 aa).

This sequence belongs to the RRF family.

The protein localises to the cytoplasm. Functionally, responsible for the release of ribosomes from messenger RNA at the termination of protein biosynthesis. May increase the efficiency of translation by recycling ribosomes from one round of translation to another. This is Ribosome-recycling factor from Bacillus pumilus (strain SAFR-032).